The primary structure comprises 255 residues: Large ribosomal subunit protein uL4 (255 aa).

It belongs to the universal ribosomal protein uL4 family. In terms of assembly, part of the 50S ribosomal subunit.

Functionally, one of the primary rRNA binding proteins, this protein initially binds near the 5'-end of the 23S rRNA. It is important during the early stages of 50S assembly. It makes multiple contacts with different domains of the 23S rRNA in the assembled 50S subunit and ribosome. Its function is as follows. Forms part of the polypeptide exit tunnel. In Thermoplasma acidophilum (strain ATCC 25905 / DSM 1728 / JCM 9062 / NBRC 15155 / AMRC-C165), this protein is Large ribosomal subunit protein uL4.